The sequence spans 333 residues: Homeobox protein Hox-A1 (333 aa).

The segment at 61–82 (ITSPHHHHHHHHHPQPATYQTS) is disordered. Residues 64–74 (PHHHHHHHHHP) are compositionally biased toward basic residues. Residues 74 to 202 (PQPATYQTSG…PASETSSPAQ (129 aa)) are interaction with OGT. T152 is a glycosylation site (O-linked (GlcNAc) threonine). The short motif at 203 to 208 (TFDWMK) is the Antp-type hexapeptide element. The segment at residues 227-286 (QPNAVRTNFTTKQLTELEKEFHFNKYLTRARSEIAASLQLNETQVKIWFQNRRMKQKKRE) is a DNA-binding region (homeobox). The interval 279–333 (RMKQKKREKEGLLPMSPATPPGSDEKTEESSEKSSSSPSAPSPASSTSDTLTTSH) is disordered. Residues 301–310 (SDEKTEESSE) are compositionally biased toward basic and acidic residues. Low complexity predominate over residues 311-333 (KSSSSPSAPSPASSTSDTLTTSH).

The protein belongs to the Antp homeobox family. Labial subfamily. In terms of assembly, interacts with OGT (via TPR repeats domain); the interaction takes place mainly in the nucleus. Forms a DNA-binding heterodimer with transcription factor PBX1. In terms of processing, glycosylated by OGT.

The protein localises to the nucleus. Its function is as follows. Sequence-specific transcription factor. Regulates multiple developmental processes including brainstem, inner and outer ear, abducens nerve and cardiovascular development and morphogenesis as well as cognition and behavior. Also part of a developmental regulatory system that provides cells with specific positional identities on the anterior-posterior axis. Acts on the anterior body structures. Seems to act in the maintenance and/or generation of hindbrain segments. Activates transcription in the presence of PBX1A and PKNOX1. The protein is Homeobox protein Hox-A1 (Hoxa1) of Rattus norvegicus (Rat).